A 109-amino-acid chain; its full sequence is Oncomodulin (109 aa).

N-acetylserine is present on serine 2. 2 consecutive EF-hand domains span residues methionine 39–aspartate 74 and leucine 78–serine 109. Residues aspartate 52, aspartate 54, serine 56, tyrosine 58, glutamate 63, aspartate 91, aspartate 93, aspartate 95, lysine 97, and glutamate 102 each coordinate Ca(2+).

It belongs to the parvalbumin family. Found in tumor tissues and not detected in normal tissues.

Its function is as follows. Has some calmodulin-like activity with respect to enzyme activation and growth regulation. Binds two calcium ions. In Rattus norvegicus (Rat), this protein is Oncomodulin (Ocm).